Here is a 124-residue protein sequence, read N- to C-terminus: Large ribosomal subunit protein bL12 (124 aa).

Belongs to the bacterial ribosomal protein bL12 family. As to quaternary structure, homodimer. Part of the ribosomal stalk of the 50S ribosomal subunit. Forms a multimeric L10(L12)X complex, where L10 forms an elongated spine to which 2 to 4 L12 dimers bind in a sequential fashion. Binds GTP-bound translation factors.

In terms of biological role, forms part of the ribosomal stalk which helps the ribosome interact with GTP-bound translation factors. Is thus essential for accurate translation. This Burkholderia cenocepacia (strain HI2424) protein is Large ribosomal subunit protein bL12.